The following is a 782-amino-acid chain: ATP-dependent RNA helicase MAK5 (782 aa).

Basic residues predominate over residues methionine 1 to leucine 22. Disordered regions lie at residues methionine 1–lysine 24 and phenylalanine 71–lysine 164. The span at phenylalanine 71 to threonine 88 shows a compositional bias: basic and acidic residues. A compositionally biased stretch (acidic residues) spans methionine 96 to glutamine 147. A Q motif motif is present at residues glutamate 197 to lysine 225. One can recognise a Helicase ATP-binding domain in the interval isoleucine 228–serine 426. Alanine 241–threonine 248 provides a ligand contact to ATP. The short motif at aspartate 364–aspartate 367 is the DEAD box element. The region spanning tyrosine 478–aspartate 635 is the Helicase C-terminal domain. The disordered stretch occupies residues aspartate 762–lysine 782. Positions serine 766–lysine 782 are enriched in basic residues.

This sequence belongs to the DEAD box helicase family. DDX24/MAK5 subfamily.

Its subcellular location is the nucleus. It is found in the nucleolus. The catalysed reaction is ATP + H2O = ADP + phosphate + H(+). Its function is as follows. ATP-binding RNA helicase involved in the biogenesis of 60S ribosomal subunits and is required for the normal formation of 25S and 5.8S rRNAs. This is ATP-dependent RNA helicase MAK5 (MAK5) from Candida albicans (strain SC5314 / ATCC MYA-2876) (Yeast).